We begin with the raw amino-acid sequence, 119 residues long: Beta-2-microglobulin (119 aa).

The first 20 residues, 1–20 (MGRFVAVALLVLLSLSGLET), serve as a signal peptide directing secretion. Positions 25-114 (PKIQVYSRHP…VTFSTPKTVK (90 aa)) constitute an Ig-like C1-type domain. A disulfide bridge connects residues C45 and C100.

It belongs to the beta-2-microglobulin family. As to quaternary structure, heterodimer of an alpha chain and a beta chain. Beta-2-microglobulin is the beta-chain of major histocompatibility complex class I molecules.

It localises to the secreted. Its function is as follows. Component of the class I major histocompatibility complex (MHC). Involved in the presentation of peptide antigens to the immune system. The sequence is that of Beta-2-microglobulin (B2M) from Callicebus personatus nigrifrons (Black-fronted titi).